The primary structure comprises 265 residues: Urease accessory protein UreH (265 aa).

This sequence belongs to the UreD family. As to quaternary structure, ureH, UreF and UreG form a complex that acts as a GTP-hydrolysis-dependent molecular chaperone, activating the urease apoprotein by helping to assemble the nickel containing metallocenter of UreC. The UreE protein probably delivers the nickel.

It is found in the cytoplasm. Required for maturation of urease via the functional incorporation of the urease nickel metallocenter. The sequence is that of Urease accessory protein UreH from Helicobacter pylori (strain HPAG1).